A 216-amino-acid chain; its full sequence is Ras-like protein (216 aa).

16–23 (GGGGVGKS) lines the GTP pocket. An Effector region motif is present at residues 38 to 46 (YDPTIEDSY). Residues 63 to 67 (DTAGQ) and 122 to 125 (NKCD) contribute to the GTP site. S-palmitoyl cysteine attachment occurs at residues Cys209 and Cys210. At Cys213 the chain carries Cysteine methyl ester. Cys213 carries S-geranylgeranyl cysteine lipidation. A propeptide spans 214–216 (VVL) (removed in mature form).

The protein belongs to the small GTPase superfamily. Ras family.

Its subcellular location is the cell membrane. It carries out the reaction GTP + H2O = GDP + phosphate + H(+). Its activity is regulated as follows. Alternates between an inactive form bound to GDP and an active form bound to GTP. Activated by a guanine nucleotide-exchange factor (GEF) and inactivated by a GTPase-activating protein (GAP). The chain is Ras-like protein (RAS1) from Cryptococcus neoformans var. neoformans serotype D (strain B-3501A) (Filobasidiella neoformans).